The sequence spans 231 residues: Small ribosomal subunit protein uS5 (231 aa).

An S5 DRBM domain is found at 61–124; the sequence is KFRSKKPYRM…NRAKLNIIKV (64 aa).

It belongs to the universal ribosomal protein uS5 family. Part of the 30S ribosomal subunit. Contacts protein S4.

Functionally, with S4 and S12 plays an important role in translational accuracy. The protein is Small ribosomal subunit protein uS5 of Nanoarchaeum equitans (strain Kin4-M).